The chain runs to 323 residues: Lipid A biosynthesis myristoyltransferase (323 aa).

The chain crosses the membrane as a helical span at residues 23 to 43 (YWGAWLGVAAMAGIALTPPKF). An HXXXXD motif motif is present at residues 139–144 (HGWAVD).

This sequence belongs to the LpxL/LpxM/LpxP family. LpxM subfamily.

The protein localises to the cell inner membrane. The catalysed reaction is alpha-Kdo-(2-&gt;4)-alpha-Kdo-(2-&gt;6)-(dodecanoyl)-lipid IVA (E. coli) + tetradecanoyl-[ACP] = alpha-Kdo-(2-&gt;4)-alpha-Kdo-(2-&gt;6)-lipid A (E. coli) + holo-[ACP]. It catalyses the reaction (9Z)-hexadecenoyl-(Kdo)2-lipid IVA (E. coli) + tetradecanoyl-[ACP] = ((9Z)-hexadecenoyl-tetradecanoyl)-(Kdo)2-lipid A + holo-[ACP]. It functions in the pathway glycolipid biosynthesis; KDO(2)-lipid A biosynthesis; KDO(2)-lipid A from CMP-3-deoxy-D-manno-octulosonate and lipid IV(A): step 4/4. It participates in bacterial outer membrane biogenesis; lipopolysaccharide biosynthesis. Its function is as follows. Catalyzes the transfer of myristate from myristoyl-[acyl-carrier-protein] (ACP) to Kdo(2)-(lauroyl)-lipid IV(A) to form Kdo(2)-lipid A. Can probably also catalyze the transfer of myristate to Kdo(2)-(palmitoleoyl)-lipid IV(A) to form the cold-adapted Kdo(2)-lipid A. In vitro, can acylate Kdo(2)-lipid IV(A), but acylation of (KDO)2-(lauroyl)-lipid IV(A) is about 100 times faster. In vitro, can use lauroyl-ACP but displays a slight kinetic preference for myristoyl-ACP. In Escherichia coli (strain K12), this protein is Lipid A biosynthesis myristoyltransferase.